A 239-amino-acid polypeptide reads, in one-letter code: tRNA (guanine-N(1)-)-methyltransferase (239 aa).

Residues Gly108 and 127 to 132 (IGDYVL) each bind S-adenosyl-L-methionine.

It belongs to the RNA methyltransferase TrmD family. As to quaternary structure, homodimer.

Its subcellular location is the cytoplasm. It carries out the reaction guanosine(37) in tRNA + S-adenosyl-L-methionine = N(1)-methylguanosine(37) in tRNA + S-adenosyl-L-homocysteine + H(+). Its function is as follows. Specifically methylates guanosine-37 in various tRNAs. The polypeptide is tRNA (guanine-N(1)-)-methyltransferase (Lactobacillus helveticus (strain DPC 4571)).